The chain runs to 585 residues: Arginine--tRNA ligase (585 aa).

A 'HIGH' region motif is present at residues 131-141; the sequence is ANPTGPMHVGH.

It belongs to the class-I aminoacyl-tRNA synthetase family. In terms of assembly, monomer.

It localises to the cytoplasm. The enzyme catalyses tRNA(Arg) + L-arginine + ATP = L-arginyl-tRNA(Arg) + AMP + diphosphate. The polypeptide is Arginine--tRNA ligase (Allorhizobium ampelinum (strain ATCC BAA-846 / DSM 112012 / S4) (Agrobacterium vitis (strain S4))).